The following is a 336-amino-acid chain: Mediator of RNA polymerase II transcription subunit 4 (336 aa).

2 disordered regions span residues 1–45 and 59–85; these read MNST…SNVV and NVEE…QDEA. Residues 154–192 are a coiled coil; the sequence is QQAAQTIAALERVSEGLDDKIRDMIRKLAECRRELRNYQ. The tract at residues 281 to 336 is disordered; the sequence is PVANGVAQNHNNGYAMERRLSTGYGSDNDGDTNMNGRSGLAGLDIFDDDDDDDDDD. The span at 325–336 shows a compositional bias: acidic residues; sequence IFDDDDDDDDDD.

It belongs to the Mediator complex subunit 4 family. As to quaternary structure, component of the Mediator complex.

The protein resides in the nucleus. In terms of biological role, component of the Mediator complex, a coactivator involved in the regulated transcription of nearly all RNA polymerase II-dependent genes. Mediator functions as a bridge to convey information from gene-specific regulatory proteins to the basal RNA polymerase II transcription machinery. Mediator is recruited to promoters by direct interactions with regulatory proteins and serves as a scaffold for the assembly of a functional preinitiation complex with RNA polymerase II and the general transcription factors. This Yarrowia lipolytica (strain CLIB 122 / E 150) (Yeast) protein is Mediator of RNA polymerase II transcription subunit 4 (MED4).